Consider the following 263-residue polypeptide: MRDQAPLIHPTAVIDPSAQLASDVRVGAFSLIGADVHIGAGTEVGPHCSIHGPTRIGRNNRFIGHAAIGGEPQDKKYAGERTELVIGDDNVIREFVTINRGTRGGGGITTVGNDNWMLAYTHVAHDCHVGNHCVFSNNTTLAGHVTVGDYVIISGFAGAHQFCRIGAHAFLGMGALTNGDVPPFTMVGRESLGRPRGINSEGLKRRGFDAERITAIKRAYRTLYVAGLPLTDAKLQLAEQAKSSDDVRGMLEFIEAAERSLLR.

The protein belongs to the transferase hexapeptide repeat family. LpxA subfamily. As to quaternary structure, homotrimer.

Its subcellular location is the cytoplasm. The enzyme catalyses a (3R)-hydroxyacyl-[ACP] + UDP-N-acetyl-alpha-D-glucosamine = a UDP-3-O-[(3R)-3-hydroxyacyl]-N-acetyl-alpha-D-glucosamine + holo-[ACP]. It functions in the pathway glycolipid biosynthesis; lipid IV(A) biosynthesis; lipid IV(A) from (3R)-3-hydroxytetradecanoyl-[acyl-carrier-protein] and UDP-N-acetyl-alpha-D-glucosamine: step 1/6. Functionally, involved in the biosynthesis of lipid A, a phosphorylated glycolipid that anchors the lipopolysaccharide to the outer membrane of the cell. The protein is Acyl-[acyl-carrier-protein]--UDP-N-acetylglucosamine O-acyltransferase of Xanthomonas oryzae pv. oryzae (strain PXO99A).